Reading from the N-terminus, the 190-residue chain is Bifunctional D-Ala-D-Ala dipeptidase and D-Ala-D-Ala carboxypeptidase VanXYC (190 aa).

Residue glutamate 66 coordinates Mg(2+). A dipeptide-binding residues include glutamine 67, alanine 88, serine 93, histidine 95, and aspartate 102. Cu(2+) is bound by residues histidine 95 and aspartate 102. Zn(2+) is bound by residues histidine 95 and aspartate 102. Residue glutamate 153 is the catalytic acid/base residue of the active site. Positions 155 and 156 each coordinate a dipeptide. Histidine 156 contributes to the Cu(2+) binding site. Residue histidine 156 participates in Zn(2+) binding.

It belongs to the peptidase M15D family. In terms of assembly, homodimer.

It localises to the cytoplasm. It carries out the reaction D-alanyl-D-alanine + H2O = 2 D-alanine. It catalyses the reaction UDP-N-acetyl-alpha-D-muramoyl-L-alanyl-gamma-D-glutamyl-L-lysyl-D-alanyl-D-alanine + H2O = UDP-N-acetyl-alpha-D-muramoyl-L-alanyl-gamma-D-glutamyl-L-lysyl-D-alanine + D-alanine. Bifunctional enzyme, exhibiting dipeptidase and carboxypeptidase activities. Catalyzes hydrolysis of the D-alanyl-D-alanine dipeptide. Cleaves the C-terminal D-alanine residue of UDP-muramyl-pentapeptide[Ala] (UDP-MurNAc-L-Ala-D-Glu-L-Lys-D-Ala-D-Ala). Shows no activity against the pentapeptide with a C-terminal D-serine residue. Together with VanC/VanC1 and VanT, required for vancomycin resistance in E.gallinarum strain BM4174. This is Bifunctional D-Ala-D-Ala dipeptidase and D-Ala-D-Ala carboxypeptidase VanXYC from Enterococcus gallinarum.